The primary structure comprises 151 residues: Ribosome maturation factor RimP (151 aa).

It belongs to the RimP family.

The protein localises to the cytoplasm. In terms of biological role, required for maturation of 30S ribosomal subunits. The polypeptide is Ribosome maturation factor RimP (Saccharophagus degradans (strain 2-40 / ATCC 43961 / DSM 17024)).